The chain runs to 429 residues: Adenylosuccinate synthetase (429 aa).

GTP is bound by residues 12-18 (GDEGKGK) and 40-42 (GHT). The Proton acceptor role is filled by aspartate 13. Mg(2+) contacts are provided by aspartate 13 and glycine 40. IMP is bound by residues 13-16 (DEGK), 38-41 (NAGH), threonine 129, arginine 143, glutamine 223, threonine 238, and arginine 302. The Proton donor role is filled by histidine 41. Substrate is bound at residue 298 to 304 (VVTGRKR). Residues arginine 304, 330 to 332 (KLD), and 412 to 414 (STS) contribute to the GTP site.

The protein belongs to the adenylosuccinate synthetase family. Homodimer. Mg(2+) serves as cofactor.

It localises to the cytoplasm. The catalysed reaction is IMP + L-aspartate + GTP = N(6)-(1,2-dicarboxyethyl)-AMP + GDP + phosphate + 2 H(+). Its pathway is purine metabolism; AMP biosynthesis via de novo pathway; AMP from IMP: step 1/2. In terms of biological role, plays an important role in the de novo pathway of purine nucleotide biosynthesis. Catalyzes the first committed step in the biosynthesis of AMP from IMP. The protein is Adenylosuccinate synthetase of Brucella suis (strain ATCC 23445 / NCTC 10510).